Reading from the N-terminus, the 235-residue chain is Ubiquinone biosynthesis O-methyltransferase (235 aa).

4 residues coordinate S-adenosyl-L-methionine: Arg-39, Gly-59, Asp-80, and Met-124.

It belongs to the methyltransferase superfamily. UbiG/COQ3 family.

The catalysed reaction is a 3-demethylubiquinol + S-adenosyl-L-methionine = a ubiquinol + S-adenosyl-L-homocysteine + H(+). The enzyme catalyses a 3-(all-trans-polyprenyl)benzene-1,2-diol + S-adenosyl-L-methionine = a 2-methoxy-6-(all-trans-polyprenyl)phenol + S-adenosyl-L-homocysteine + H(+). The protein operates within cofactor biosynthesis; ubiquinone biosynthesis. Functionally, O-methyltransferase that catalyzes the 2 O-methylation steps in the ubiquinone biosynthetic pathway. This Vibrio campbellii (strain ATCC BAA-1116) protein is Ubiquinone biosynthesis O-methyltransferase.